A 355-amino-acid polypeptide reads, in one-letter code: Nuclear hormone receptor family member nhr-127 (355 aa).

The segment at residues 10 to 86 is a DNA-binding region (nuclear receptor); that stretch reads SIPCEVCKNQ…AGMKAEKIQK (77 aa). 2 consecutive NR C4-type zinc fingers follow at residues 13-33 and 49-69; these read CEVC…CGAC and CKDG…CRYC. Residues 126 to 355 form the NR LBD domain; that stretch reads NPHNASEGCS…IVQIVQNNFY (230 aa).

Belongs to the nuclear hormone receptor family.

It is found in the nucleus. In terms of biological role, orphan nuclear receptor. May play a role in modulation of lifespan and immunity. The polypeptide is Nuclear hormone receptor family member nhr-127 (nhr-127) (Caenorhabditis elegans).